A 188-amino-acid chain; its full sequence is Elongation factor P (188 aa).

This sequence belongs to the elongation factor P family.

The protein resides in the cytoplasm. Its pathway is protein biosynthesis; polypeptide chain elongation. Involved in peptide bond synthesis. Stimulates efficient translation and peptide-bond synthesis on native or reconstituted 70S ribosomes in vitro. Probably functions indirectly by altering the affinity of the ribosome for aminoacyl-tRNA, thus increasing their reactivity as acceptors for peptidyl transferase. The sequence is that of Elongation factor P from Rhodopseudomonas palustris (strain BisB5).